Consider the following 260-residue polypeptide: Cytochrome c oxidase subunit 3 (260 aa).

Transmembrane regions (helical) follow at residues 41–61 (LTLV…RDII), 81–101 (GMIL…WAFF), 133–153 (TGVL…ILAG), 161–181 (ALFL…WEYI), 196–216 (FFVA…FLMV), and 238–258 (AWYW…IYWW).

Belongs to the cytochrome c oxidase subunit 3 family. In terms of assembly, component of the cytochrome c oxidase (complex IV, CIV), a multisubunit enzyme composed of a catalytic core of 3 subunits and several supernumerary subunits. The complex exists as a monomer or a dimer and forms supercomplexes (SCs) in the inner mitochondrial membrane with ubiquinol-cytochrome c oxidoreductase (cytochrome b-c1 complex, complex III, CIII).

It localises to the mitochondrion inner membrane. The enzyme catalyses 4 Fe(II)-[cytochrome c] + O2 + 8 H(+)(in) = 4 Fe(III)-[cytochrome c] + 2 H2O + 4 H(+)(out). Functionally, component of the cytochrome c oxidase, the last enzyme in the mitochondrial electron transport chain which drives oxidative phosphorylation. The respiratory chain contains 3 multisubunit complexes succinate dehydrogenase (complex II, CII), ubiquinol-cytochrome c oxidoreductase (cytochrome b-c1 complex, complex III, CIII) and cytochrome c oxidase (complex IV, CIV), that cooperate to transfer electrons derived from NADH and succinate to molecular oxygen, creating an electrochemical gradient over the inner membrane that drives transmembrane transport and the ATP synthase. Cytochrome c oxidase is the component of the respiratory chain that catalyzes the reduction of oxygen to water. Electrons originating from reduced cytochrome c in the intermembrane space (IMS) are transferred via the dinuclear copper A center (CU(A)) of subunit 2 and heme A of subunit 1 to the active site in subunit 1, a binuclear center (BNC) formed by heme A3 and copper B (CU(B)). The BNC reduces molecular oxygen to 2 water molecules using 4 electrons from cytochrome c in the IMS and 4 protons from the mitochondrial matrix. This chain is Cytochrome c oxidase subunit 3 (COIII), found in Strongylocentrotus purpuratus (Purple sea urchin).